A 417-amino-acid chain; its full sequence is MSENLIIFNAKVVTPLGFSARKGKEMAELRILEKATVEVVDGIITYVGPNRGEVRDGYYHHFWHYNARGKCLLPGFVDSHTHFVFGGERAEEFSWRLKGESYMSIMQRGGGIASTVQATRELSFIHLRSKAEGLLKKMTAMGITTVEGKSGYGLNRETELLQLKVMRSLNKDEGVRVDIVPTFLGAHALPDEYKERPDDYIDFLIRELLPVIQRDSLAEFCDVFCEEGVFSIEQSRRLLTAAGDYGLLPKLHADEIVPLGGAELAAELGAVSADHLLHASDAGIEAMARKGVVATLLPLTAFALKEPYARGRDMIDAGCAVALATDLNPGSCFSGSIPLTFALACIHMQLTVEEAITALTLNGAAALNRADSIGSIEVGKKGDFVVLDSDNYHILPYYVGMNCVNTTIKGGMLYPSV.

The Fe(3+) site is built by His80 and His82. Zn(2+) is bound by residues His80 and His82. Arg89, Tyr152, and His187 together coordinate 4-imidazolone-5-propanoate. An N-formimidoyl-L-glutamate-binding site is contributed by Tyr152. His252 is a Fe(3+) binding site. Residue His252 participates in Zn(2+) binding. A 4-imidazolone-5-propanoate-binding site is contributed by Glu255. Asp326 is a binding site for Fe(3+). Asp326 provides a ligand contact to Zn(2+). Asn328 and Gly330 together coordinate N-formimidoyl-L-glutamate. Position 331 (Ser331) interacts with 4-imidazolone-5-propanoate.

This sequence belongs to the metallo-dependent hydrolases superfamily. HutI family. Zn(2+) is required as a cofactor. The cofactor is Fe(3+).

Its subcellular location is the cytoplasm. The catalysed reaction is 4-imidazolone-5-propanoate + H2O = N-formimidoyl-L-glutamate. It functions in the pathway amino-acid degradation; L-histidine degradation into L-glutamate; N-formimidoyl-L-glutamate from L-histidine: step 3/3. In terms of biological role, catalyzes the hydrolytic cleavage of the carbon-nitrogen bond in imidazolone-5-propanoate to yield N-formimidoyl-L-glutamate. It is the third step in the universal histidine degradation pathway. The protein is Imidazolonepropionase of Bacteroides fragilis (strain ATCC 25285 / DSM 2151 / CCUG 4856 / JCM 11019 / LMG 10263 / NCTC 9343 / Onslow / VPI 2553 / EN-2).